We begin with the raw amino-acid sequence, 147 residues long: Nucleoside diphosphate kinase (147 aa).

ATP contacts are provided by Lys9, Phe57, Arg85, Thr91, Arg102, and Asn112. His115 functions as the Pros-phosphohistidine intermediate in the catalytic mechanism.

It belongs to the NDK family. Homotetramer. The cofactor is Mg(2+).

The protein localises to the cytoplasm. It catalyses the reaction a 2'-deoxyribonucleoside 5'-diphosphate + ATP = a 2'-deoxyribonucleoside 5'-triphosphate + ADP. The catalysed reaction is a ribonucleoside 5'-diphosphate + ATP = a ribonucleoside 5'-triphosphate + ADP. In terms of biological role, major role in the synthesis of nucleoside triphosphates other than ATP. The ATP gamma phosphate is transferred to the NDP beta phosphate via a ping-pong mechanism, using a phosphorylated active-site intermediate. This is Nucleoside diphosphate kinase from Thermosipho melanesiensis (strain DSM 12029 / CIP 104789 / BI429).